The following is a 296-amino-acid chain: Fructose-bisphosphate aldolase class 1 (296 aa).

The Proton acceptor role is filled by glutamate 175. Lysine 212 serves as the catalytic Schiff-base intermediate with dihydroxyacetone-P.

This sequence belongs to the class I fructose-bisphosphate aldolase family.

It catalyses the reaction beta-D-fructose 1,6-bisphosphate = D-glyceraldehyde 3-phosphate + dihydroxyacetone phosphate. The protein operates within carbohydrate degradation; glycolysis; D-glyceraldehyde 3-phosphate and glycerone phosphate from D-glucose: step 4/4. This Staphylococcus aureus (strain MSSA476) protein is Fructose-bisphosphate aldolase class 1.